The primary structure comprises 348 residues: F(420)H(2) dehydrogenase subunit H (348 aa).

8 consecutive transmembrane segments (helical) span residues 20-40 (GVVG…AVWL), 93-113 (IFMM…AVFI), 127-147 (ISVL…FMIA), 172-192 (PLGI…IVEI), 198-218 (LLWN…ALMA), 259-279 (ILGS…PAFV), 286-306 (GLIA…MTII), and 328-348 (LLPL…YLGA).

This sequence belongs to the complex I subunit 1 family. In terms of assembly, the FPO complex is composed of at least 13 different subunits. FpoA, FpoH, FpoJ, FpoK, FpoL, FpoM and FpoN proteins constitute the membrane sector of the complex.

The protein localises to the cell membrane. It carries out the reaction methanophenazine + reduced coenzyme F420-(gamma-L-Glu)(n) = dihydromethanophenazine + oxidized coenzyme F420-(gamma-L-Glu)(n) + H(+). In terms of biological role, component of the F(420)H(2) dehydrogenase (FPO complex) which is part of the energy-conserving F(420)H(2):heterodisulfide oxidoreductase system. The membrane-bound electron transfer system of the complex plays an important role in the metabolism of methylotrophic methanogens when the organisms grow on methanol or methylamines. Catalyzes the oxidation of methanophenazine to dihydromethanophenazine. It shuttles electrons from F(420)H(2), via FAD and iron-sulfur (Fe-S) centers, to methanophenazine (an electron carrier in the membrane). It couples the redox reaction to proton translocation (for every two electrons transferred, two hydrogen ions are translocated across the cytoplasmic membrane), and thus conserves the redox energy in a proton gradient. This chain is F(420)H(2) dehydrogenase subunit H, found in Methanosarcina acetivorans (strain ATCC 35395 / DSM 2834 / JCM 12185 / C2A).